The following is a 1226-amino-acid chain: Chromosome partition protein Smc (1226 aa).

32-39 (PNGCGKSN) is an ATP binding site. Coiled coils occupy residues 173–231 (ITKF…IKRN) and 269–491 (NSLE…SKSL). Residues 527–635 (YQLLGNLIQC…FDGYFIASKF (109 aa)) form the SMC hinge domain. Coiled coils occupy residues 679 to 741 (QGVV…AAKK), 775 to 965 (MLES…LREA), and 1006 to 1078 (HRRY…KSKE).

The protein belongs to the SMC family. Homodimer.

The protein resides in the cytoplasm. Functionally, required for chromosome condensation and partitioning. In Halobacteriovorax marinus (strain ATCC BAA-682 / DSM 15412 / SJ) (Bacteriovorax marinus), this protein is Chromosome partition protein Smc.